The primary structure comprises 375 residues: D-aspartate oxidase (375 aa).

Residues 1-17 form the signal peptide; that stretch reads MATVCVVGSGILGLAVA. Residues serine 9, leucine 12, aspartate 34, serine 51, and glycine 55 each contribute to the FAD site. N-linked (GlcNAc...) asparagine glycosylation occurs at asparagine 203. FAD is bound by residues arginine 322, glycine 354, and tyrosine 355.

This sequence belongs to the DAMOX/DASOX family. Requires FAD as cofactor.

It catalyses the reaction D-aspartate + O2 + H2O = oxaloacetate + H2O2 + NH4(+). The catalysed reaction is D-glutamate + O2 + H2O = H2O2 + 2-oxoglutarate + NH4(+). In terms of biological role, selectively catalyzes the oxidative deamination of acidic amino acids. Protects the organism from the toxicity of D-amino acids. Enables the organism to utilize D-amino acids as a source of nutrients. Enables the organism to utilize D-aspartate as a nitrogen source. The protein is D-aspartate oxidase (DDO) of Komagataella phaffii (strain GS115 / ATCC 20864) (Yeast).